The chain runs to 380 residues: NF-kappa-B inhibitor-like protein 1 (380 aa).

Residues 1 to 34 form a disordered region; that stretch reads MSNPSPQVPEEEASTSVCRPKSSMASTSRRQRRE. ANK repeat units lie at residues 64–93 and 97–133; these read GQPP…DPAH and HGDT…IKNK. 2 disordered regions span residues 131–166 and 185–293; these read KNKD…EWRQ and GDAS…RGSL. Residue Ser-150 is modified to Phosphoserine. The segment covering 237–286 has biased composition (basic and acidic residues); that stretch reads QQEEEQRLFRERARAKEEELRESRARRAQEALGDREPKPTRAGPREEHPR.

As to quaternary structure, interacts with CACTIN (via N-terminal domain); the interaction occurs in a pro-inflammatory-independent manner.

It localises to the nucleus. Its function is as follows. Involved in the regulation of innate immune response. Acts as negative regulator of Toll-like receptor and interferon-regulatory factor (IRF) signaling pathways. Contributes to the negative regulation of transcriptional activation of NF-kappa-B target genes in response to endogenous pro-inflammatory stimuli. In Pan troglodytes (Chimpanzee), this protein is NF-kappa-B inhibitor-like protein 1 (NFKBIL1).